Here is a 131-residue protein sequence, read N- to C-terminus: MAASLPHPKIVKKHTKKFKRHHSDRYHRVSENWRKQKGIDSVVRRRFRGNISEPTIGYGSNKKTKFMSPSGHKVVLVSNLKDLETLTMHTKSYAAEIAHNVSSKNRVTLLARAKALGVKVTNAKGRLALEA.

The protein belongs to the eukaryotic ribosomal protein eL32 family.

The chain is Large ribosomal subunit protein eL32 (RPL32) from Candida glabrata (strain ATCC 2001 / BCRC 20586 / JCM 3761 / NBRC 0622 / NRRL Y-65 / CBS 138) (Yeast).